We begin with the raw amino-acid sequence, 386 residues long: Sulfate adenylyltransferase (386 aa).

It belongs to the sulfate adenylyltransferase family.

The catalysed reaction is sulfate + ATP + H(+) = adenosine 5'-phosphosulfate + diphosphate. Its pathway is sulfur metabolism; hydrogen sulfide biosynthesis; sulfite from sulfate: step 1/3. The polypeptide is Sulfate adenylyltransferase (Persephonella marina (strain DSM 14350 / EX-H1)).